Consider the following 427-residue polypeptide: Phosphatidylserine decarboxylase proenzyme 1, mitochondrial (427 aa).

Residues 1-77 constitute a mitochondrion transit peptide; the sequence is MRSYLRFSDR…RRFVYKLDQA (77 aa). Residues 78-88 are Mitochondrial matrix-facing; it reads VTAALGPNGRY. The helical transmembrane segment at 89-107 threads the bilayer; sequence IAMVGMTASAVLLTFHYKF. Residues 108–427 lie on the Mitochondrial intermembrane side of the membrane; it reads REVIAATDNV…TEDERLFAFY (320 aa). Catalysis depends on charge relay system; for autoendoproteolytic cleavage activity residues D210, H268, and S379. The Schiff-base intermediate with substrate; via pyruvic acid; for decarboxylase activity role is filled by S379. Residue S379 is modified to Pyruvic acid (Ser); by autocatalysis.

This sequence belongs to the phosphatidylserine decarboxylase family. PSD-B subfamily. Eukaryotic type I sub-subfamily. Heterodimer of a large membrane-associated beta subunit and a small pyruvoyl-containing alpha subunit. Pyruvate is required as a cofactor. Post-translationally, is synthesized initially as an inactive proenzyme. Formation of the active enzyme involves a self-maturation process in which the active site pyruvoyl group is generated from an internal serine residue via an autocatalytic post-translational modification. Two non-identical subunits are generated from the proenzyme in this reaction, and the pyruvate is formed at the N-terminus of the alpha chain, which is derived from the carboxyl end of the proenzyme. The autoendoproteolytic cleavage occurs by a canonical serine protease mechanism, in which the side chain hydroxyl group of the serine supplies its oxygen atom to form the C-terminus of the beta chain, while the remainder of the serine residue undergoes an oxidative deamination to produce ammonia and the pyruvoyl prosthetic group on the alpha chain. During this reaction, the Ser that is part of the protease active site of the proenzyme becomes the pyruvoyl prosthetic group, which constitutes an essential element of the active site of the mature decarboxylase.

It is found in the mitochondrion. The protein localises to the mitochondrion inner membrane. The catalysed reaction is a 1,2-diacyl-sn-glycero-3-phospho-L-serine + H(+) = a 1,2-diacyl-sn-glycero-3-phosphoethanolamine + CO2. Its pathway is phospholipid metabolism; phosphatidylethanolamine biosynthesis; phosphatidylethanolamine from CDP-diacylglycerol: step 2/2. Functionally, catalyzes the formation of phosphatidylethanolamine (PtdEtn) from phosphatidylserine (PtdSer). Plays a central role in phospholipid metabolism and in the interorganelle trafficking of phosphatidylserine. The protein is Phosphatidylserine decarboxylase proenzyme 1, mitochondrial of Toxoplasma gondii (strain ATCC 50853 / GT1).